The following is a 339-amino-acid chain: Ketol-acid reductoisomerase (NADP(+)) (339 aa).

The region spanning 1–182 (MRVYYDSDAD…GGGRAGIIET (182 aa)) is the KARI N-terminal Rossmann domain. NADP(+) is bound by residues 24-27 (YGSQ), Arg-48, Ser-51, and 83-86 (DEGQ). His-108 is a catalytic residue. Position 134 (Gly-134) interacts with NADP(+). Residues 183–328 (TFKEECETDL…EKLRAMMPWI (146 aa)) form the KARI C-terminal knotted domain. Mg(2+) is bound by residues Asp-191, Glu-195, Glu-227, and Glu-231. Ser-252 contributes to the substrate binding site.

The protein belongs to the ketol-acid reductoisomerase family. Requires Mg(2+) as cofactor.

The catalysed reaction is (2R)-2,3-dihydroxy-3-methylbutanoate + NADP(+) = (2S)-2-acetolactate + NADPH + H(+). It carries out the reaction (2R,3R)-2,3-dihydroxy-3-methylpentanoate + NADP(+) = (S)-2-ethyl-2-hydroxy-3-oxobutanoate + NADPH + H(+). It participates in amino-acid biosynthesis; L-isoleucine biosynthesis; L-isoleucine from 2-oxobutanoate: step 2/4. Its pathway is amino-acid biosynthesis; L-valine biosynthesis; L-valine from pyruvate: step 2/4. Functionally, involved in the biosynthesis of branched-chain amino acids (BCAA). Catalyzes an alkyl-migration followed by a ketol-acid reduction of (S)-2-acetolactate (S2AL) to yield (R)-2,3-dihydroxy-isovalerate. In the isomerase reaction, S2AL is rearranged via a Mg-dependent methyl migration to produce 3-hydroxy-3-methyl-2-ketobutyrate (HMKB). In the reductase reaction, this 2-ketoacid undergoes a metal-dependent reduction by NADPH to yield (R)-2,3-dihydroxy-isovalerate. This chain is Ketol-acid reductoisomerase (NADP(+)), found in Acidiphilium cryptum (strain JF-5).